The following is a 372-amino-acid chain: Putative glutamate--cysteine ligase 2 (372 aa).

The protein belongs to the glutamate--cysteine ligase type 2 family. YbdK subfamily.

The enzyme catalyses L-cysteine + L-glutamate + ATP = gamma-L-glutamyl-L-cysteine + ADP + phosphate + H(+). Its function is as follows. ATP-dependent carboxylate-amine ligase which exhibits weak glutamate--cysteine ligase activity. The sequence is that of Putative glutamate--cysteine ligase 2 from Rhodopirellula baltica (strain DSM 10527 / NCIMB 13988 / SH1).